We begin with the raw amino-acid sequence, 532 residues long: Transcriptional regulatory protein RtcR (532 aa).

Positions 186–424 (IATRNPHFNR…LSASVTRMAT (239 aa)) constitute a Sigma-54 factor interaction domain. ATP contacts are provided by residues 215-222 (GPTGAGKS) and 281-290 (ANGGMLFLDE). Residues 485–504 (KSLSAAGRQLFDVSRQGKAS) constitute a DNA-binding region (H-T-H motif).

Functionally, transcriptional repressor of the rtcAB genes. Interacts with sigma-54. In Escherichia coli (strain K12), this protein is Transcriptional regulatory protein RtcR (rtcR).